Here is a 274-residue protein sequence, read N- to C-terminus: Glutamate racemase (274 aa).

Substrate-binding positions include Asp-9–Ser-10 and Tyr-41–Gly-42. Cys-72 functions as the Proton donor/acceptor in the catalytic mechanism. A substrate-binding site is contributed by Asn-73–Thr-74. Cys-184 (proton donor/acceptor) is an active-site residue. Thr-185 to His-186 provides a ligand contact to substrate.

This sequence belongs to the aspartate/glutamate racemases family.

The enzyme catalyses L-glutamate = D-glutamate. Its pathway is cell wall biogenesis; peptidoglycan biosynthesis. In terms of biological role, provides the (R)-glutamate required for cell wall biosynthesis. In Oceanobacillus iheyensis (strain DSM 14371 / CIP 107618 / JCM 11309 / KCTC 3954 / HTE831), this protein is Glutamate racemase.